Reading from the N-terminus, the 641-residue chain is Calpain-6 (641 aa).

The region spanning 26-343 (LFCDPTFLPE…FHKLNVCRNV (318 aa)) is the Calpain catalytic domain. The domain III stretch occupies residues 344–495 (NNPVFGRKEL…IFSEVPVQLR (152 aa)). Positions 498-621 (TLDMPKMSCW…YLRKKGGPTA (124 aa)) constitute a C2 domain.

This sequence belongs to the peptidase C2 family. In terms of assembly, interacts (via domain III) with microtubules. Interacts (via domain II) with ARHGEF2 (via the N-terminal zinc finger).

It localises to the cytoplasm. It is found in the perinuclear region. The protein localises to the cytoskeleton. Its subcellular location is the spindle. Microtubule-stabilizing protein that may be involved in the regulation of microtubule dynamics and cytoskeletal organization. May act as a regulator of RAC1 activity through interaction with ARHGEF2 to control lamellipodial formation and cell mobility. Does not seem to have protease activity as it has lost the active site residues. The chain is Calpain-6 (Capn6) from Mus musculus (Mouse).